Here is a 348-residue protein sequence, read N- to C-terminus: MKILVIGPSWVGDMMMSQSLYRTLQARYPQAIIDVMAPAWCRPLLSRMPEVNEAIPMPLGHGALEIGERRKLGHSLREKRYDRAYVLPNSFKSALVPFFAGIPHRTGWRGEMRYGLLNDVRVLDKEAWPLMVERYIALAYDKGIMRTAQDLPQPLLWPQLQVSEGEKSYTCNQFSLSSERPMIGFCPGAEFGPAKRWPHYHYAELAKQLIDEGYQVVLFGSAKDHEAGNEILAALNTEQQAWCRNLAGETQLDQAVILIAACKAIVTNDSGLMHVAAALNRPLVALYGPSSPDFTPPLSHKARVIRLITGYHKVRKGDAAEGYHQSLIDITPQRVLEELNALLLQEEA.

This sequence belongs to the glycosyltransferase 9 family.

The enzyme catalyses an L-alpha-D-Hep-(1-&gt;5)-[alpha-Kdo-(2-&gt;4)]-alpha-Kdo-(2-&gt;6)-lipid A + ADP-L-glycero-beta-D-manno-heptose = an L-alpha-D-Hep-(1-&gt;3)-L-alpha-D-Hep-(1-&gt;5)-[alpha-Kdo-(2-&gt;4)]-alpha-Kdo-(2-&gt;6)-lipid A + ADP + H(+). The catalysed reaction is L-alpha-D-Hep-(1-&gt;5)-[alpha-Kdo-(2-&gt;4)]-alpha-Kdo-(2-&gt;6)-lipid A (E. coli) + ADP-L-glycero-beta-D-manno-heptose = L-alpha-D-Hep-(1-&gt;3)-L-alpha-D-Hep-(1-&gt;5)-[alpha-Kdo-(2-&gt;4)]-alpha-Kdo-(2-&gt;6)-lipid A (E. coli) + ADP + H(+). The protein operates within bacterial outer membrane biogenesis; LPS core biosynthesis. Its function is as follows. Glycosyltransferase involved in the biosynthesis of the core oligosaccharide region of lipopolysaccharide (LPS). Catalyzes the addition of the second heptose unit to the heptosyl-Kdo2-lipid A module. The analog ADP-mannose can serve as an alternative donor in place of ADP-L-glycero-D-manno-heptose, but with lower efficiency. This chain is Lipopolysaccharide heptosyltransferase 2, found in Escherichia coli (strain K12).